The primary structure comprises 208 residues: Putative 3-methyladenine DNA glycosylase (208 aa).

The protein belongs to the DNA glycosylase MPG family.

This chain is Putative 3-methyladenine DNA glycosylase, found in Nitrobacter winogradskyi (strain ATCC 25391 / DSM 10237 / CIP 104748 / NCIMB 11846 / Nb-255).